The primary structure comprises 169 residues: ATP-dependent Clp protease adapter protein CLPS2, chloroplastic (169 aa).

The N-terminal 33 residues, 1–33, are a transit peptide targeting the chloroplast; the sequence is MLATRCKCNLPSRSFVAPARSVRTRALHVEGRF. Positions 67 to 92 are disordered; sequence DAKTDNGNNGSNTDKDKKSPPGGGNY.

The protein belongs to the ClpS family.

The protein localises to the plastid. The protein resides in the chloroplast stroma. Functionally, small adapter protein that modulate the activity of plastid Clp protease system (CLPC). Probably involved in substrate selection for plastid CLPC. The protein is ATP-dependent Clp protease adapter protein CLPS2, chloroplastic of Chlamydomonas reinhardtii (Chlamydomonas smithii).